The primary structure comprises 412 residues: Arginine biosynthesis bifunctional protein ArgJ (412 aa).

Substrate is bound by residues Thr158, Lys184, Thr195, Glu284, Asn407, and Ser412. The active-site Nucleophile is Thr195.

The protein belongs to the ArgJ family. Heterotetramer of two alpha and two beta chains.

It is found in the cytoplasm. The catalysed reaction is N(2)-acetyl-L-ornithine + L-glutamate = N-acetyl-L-glutamate + L-ornithine. It carries out the reaction L-glutamate + acetyl-CoA = N-acetyl-L-glutamate + CoA + H(+). The protein operates within amino-acid biosynthesis; L-arginine biosynthesis; L-ornithine and N-acetyl-L-glutamate from L-glutamate and N(2)-acetyl-L-ornithine (cyclic): step 1/1. It participates in amino-acid biosynthesis; L-arginine biosynthesis; N(2)-acetyl-L-ornithine from L-glutamate: step 1/4. Its function is as follows. Catalyzes two activities which are involved in the cyclic version of arginine biosynthesis: the synthesis of N-acetylglutamate from glutamate and acetyl-CoA as the acetyl donor, and of ornithine by transacetylation between N(2)-acetylornithine and glutamate. The sequence is that of Arginine biosynthesis bifunctional protein ArgJ from Bartonella quintana (strain Toulouse) (Rochalimaea quintana).